The chain runs to 75 residues: Conotoxin Leo-O3 (75 aa).

An N-terminal signal peptide occupies residues 1 to 22 (MKLTCVVIVAVLFLTACQLATA). Positions 23–42 (DISGGMRKHRALRSTTKLSR) are excised as a propeptide. 3 cysteine pairs are disulfide-bonded: cysteine 47–cysteine 60, cysteine 54–cysteine 63, and cysteine 59–cysteine 69. Cysteine 69 carries the cysteine amide modification. A propeptide spanning residues 70–75 (GSGLHV) is cleaved from the precursor.

The protein belongs to the conotoxin O1 superfamily. As to expression, expressed by the venom duct.

It is found in the secreted. The protein is Conotoxin Leo-O3 of Conus leopardus (Leopard cone).